Consider the following 198-residue polypeptide: Nucleoid occlusion factor SlmA (198 aa).

The HTH tetR-type domain occupies 10-70; it reads NRREEILQSL…SLIEFIEDSL (61 aa). Residues 33 to 52 constitute a DNA-binding region (H-T-H motif); it reads TTAKLAASVGVSEAALYRHF. Positions 117-144 form a coiled coil; sequence EQDRLQGRINQLFERIEAQLRQVLREKR.

Belongs to the nucleoid occlusion factor SlmA family. As to quaternary structure, homodimer. Interacts with FtsZ.

The protein localises to the cytoplasm. It is found in the nucleoid. Its function is as follows. Required for nucleoid occlusion (NO) phenomenon, which prevents Z-ring formation and cell division over the nucleoid. Acts as a DNA-associated cell division inhibitor that binds simultaneously chromosomal DNA and FtsZ, and disrupts the assembly of FtsZ polymers. SlmA-DNA-binding sequences (SBS) are dispersed on non-Ter regions of the chromosome, preventing FtsZ polymerization at these regions. This is Nucleoid occlusion factor SlmA from Escherichia coli O127:H6 (strain E2348/69 / EPEC).